The following is a 548-amino-acid chain: Chaperonin GroEL (548 aa).

Residues 30-33 (TLGP), K51, 87-91 (DGTTT), G415, and D495 each bind ATP.

It belongs to the chaperonin (HSP60) family. Forms a cylinder of 14 subunits composed of two heptameric rings stacked back-to-back. Interacts with the co-chaperonin GroES.

Its subcellular location is the cytoplasm. The enzyme catalyses ATP + H2O + a folded polypeptide = ADP + phosphate + an unfolded polypeptide.. Together with its co-chaperonin GroES, plays an essential role in assisting protein folding. The GroEL-GroES system forms a nano-cage that allows encapsulation of the non-native substrate proteins and provides a physical environment optimized to promote and accelerate protein folding. The sequence is that of Chaperonin GroEL from Colwellia psychrerythraea (strain 34H / ATCC BAA-681) (Vibrio psychroerythus).